Consider the following 360-residue polypeptide: DNA replication and repair protein RecF (360 aa).

33-40 is an ATP binding site; the sequence is GENGSGKT.

The protein belongs to the RecF family.

The protein localises to the cytoplasm. Its function is as follows. The RecF protein is involved in DNA metabolism; it is required for DNA replication and normal SOS inducibility. RecF binds preferentially to single-stranded, linear DNA. It also seems to bind ATP. The polypeptide is DNA replication and repair protein RecF (Rickettsia akari (strain Hartford)).